The primary structure comprises 524 residues: Bifunctional purine biosynthesis protein PurH (524 aa).

In terms of domain architecture, MGS-like spans 1–149 (MSDPLIKRAL…KNNESVTVLT (149 aa)).

Belongs to the PurH family.

It catalyses the reaction (6R)-10-formyltetrahydrofolate + 5-amino-1-(5-phospho-beta-D-ribosyl)imidazole-4-carboxamide = 5-formamido-1-(5-phospho-D-ribosyl)imidazole-4-carboxamide + (6S)-5,6,7,8-tetrahydrofolate. The enzyme catalyses IMP + H2O = 5-formamido-1-(5-phospho-D-ribosyl)imidazole-4-carboxamide. It functions in the pathway purine metabolism; IMP biosynthesis via de novo pathway; 5-formamido-1-(5-phospho-D-ribosyl)imidazole-4-carboxamide from 5-amino-1-(5-phospho-D-ribosyl)imidazole-4-carboxamide (10-formyl THF route): step 1/1. Its pathway is purine metabolism; IMP biosynthesis via de novo pathway; IMP from 5-formamido-1-(5-phospho-D-ribosyl)imidazole-4-carboxamide: step 1/1. The polypeptide is Bifunctional purine biosynthesis protein PurH (Chlorobium luteolum (strain DSM 273 / BCRC 81028 / 2530) (Pelodictyon luteolum)).